Consider the following 227-residue polypeptide: MSKDYEVFPLLLEMAKRGCLVAPRRLSRIEILKTLGLTPWRFKKLVEAAEEEGYIERRVHGRMVFYVVTERGRALLRRVYDDLKRTIDSSTFLTLRGYVVPGLGEGAIYMGIPRYVEAFKEVLGYEPYPGTLNIKLVDEDVYLRRALREKRVGFRIEGFRLDEGRESCGVTVYKAMIMANGVTVSGAALDIDKTKHGDEILELIAPVRLRDELRLKDGDKVEVVIPV.

An H-T-H motif-like region spans residues 1-92 (MSKDYEVFPL…LKRTIDSSTF (92 aa)). The interval 93-227 (LTLRGYVVPG…GDKVEVVIPV (135 aa)) is riboflavin kinase. 102–107 (GLGEGA) contacts CDP. Positions 131 and 133 each coordinate Mg(2+). Residues T194 and E202 each coordinate FMN. 207–210 (VRLR) contacts CDP.

The protein belongs to the archaeal riboflavin kinase family. The cofactor is Mg(2+).

The enzyme catalyses riboflavin + CTP = CDP + FMN + H(+). Its pathway is cofactor biosynthesis; FMN biosynthesis; FMN from riboflavin (CTP route): step 1/1. Catalyzes the CTP-dependent phosphorylation of riboflavin (vitamin B2) to form flavin mononucleotide (FMN). This is Riboflavin kinase (ribK) from Thermofilum pendens (strain DSM 2475 / Hrk 5).